Here is a 380-residue protein sequence, read N- to C-terminus: Queuine tRNA-ribosyltransferase (380 aa).

Aspartate 95 acts as the Proton acceptor in catalysis. Substrate contacts are provided by residues 95–99 (DSGGF), aspartate 149, glutamine 192, and glycine 219. The segment at 250–256 (GVGSPDS) is RNA binding. The active-site Nucleophile is aspartate 269. Positions 274–278 (TRIGR) are RNA binding; important for wobble base 34 recognition. Cysteine 307, cysteine 309, cysteine 312, and histidine 338 together coordinate Zn(2+).

This sequence belongs to the queuine tRNA-ribosyltransferase family. As to quaternary structure, homodimer. Within each dimer, one monomer is responsible for RNA recognition and catalysis, while the other monomer binds to the replacement base PreQ1. Zn(2+) serves as cofactor.

The enzyme catalyses 7-aminomethyl-7-carbaguanine + guanosine(34) in tRNA = 7-aminomethyl-7-carbaguanosine(34) in tRNA + guanine. It functions in the pathway tRNA modification; tRNA-queuosine biosynthesis. Catalyzes the base-exchange of a guanine (G) residue with the queuine precursor 7-aminomethyl-7-deazaguanine (PreQ1) at position 34 (anticodon wobble position) in tRNAs with GU(N) anticodons (tRNA-Asp, -Asn, -His and -Tyr). Catalysis occurs through a double-displacement mechanism. The nucleophile active site attacks the C1' of nucleotide 34 to detach the guanine base from the RNA, forming a covalent enzyme-RNA intermediate. The proton acceptor active site deprotonates the incoming PreQ1, allowing a nucleophilic attack on the C1' of the ribose to form the product. After dissociation, two additional enzymatic reactions on the tRNA convert PreQ1 to queuine (Q), resulting in the hypermodified nucleoside queuosine (7-(((4,5-cis-dihydroxy-2-cyclopenten-1-yl)amino)methyl)-7-deazaguanosine). The polypeptide is Queuine tRNA-ribosyltransferase (Geobacillus thermodenitrificans (strain NG80-2)).